The primary structure comprises 519 residues: Cell division cycle protein 20 homolog B (519 aa).

Positions 77 to 106 (WQLSPARDPESSSSVEEGPPSHTPESLASG) are disordered. Over residues 87 to 96 (SSSSVEEGPP) the composition is skewed to low complexity. WD repeat units follow at residues 229–266 (RNDY…WIEN), 271–310 (VCCH…QLRN), 353–392 (YHKE…GVQG), 399–441 (PQST…NIQT), 443–484 (STQS…RSGG), and 487–519 (GHRD…WKCC).

Belongs to the WD repeat CDC20/Fizzy family. In terms of tissue distribution, expressed in multiciliated cells (MCCs).

It localises to the cytoplasm. Protein regulator of centriole-deuterosome disengagement and subsequently participates in the ciliogenesis in multiciliated cells (MCCs). The protein is Cell division cycle protein 20 homolog B of Mus musculus (Mouse).